The primary structure comprises 450 residues: 3-phosphoshikimate 1-carboxyvinyltransferase (450 aa).

3-phosphoshikimate-binding residues include Lys-28, Ser-29, and Arg-33. A phosphoenolpyruvate-binding site is contributed by Lys-28. Positions 100 and 128 each coordinate phosphoenolpyruvate. Residues Ser-173, Gln-175, Asp-326, and Lys-353 each contribute to the 3-phosphoshikimate site. Position 175 (Gln-175) interacts with phosphoenolpyruvate. Asp-326 serves as the catalytic Proton acceptor. Residues Arg-357 and Arg-402 each coordinate phosphoenolpyruvate.

Belongs to the EPSP synthase family. In terms of assembly, monomer.

Its subcellular location is the cytoplasm. The enzyme catalyses 3-phosphoshikimate + phosphoenolpyruvate = 5-O-(1-carboxyvinyl)-3-phosphoshikimate + phosphate. It functions in the pathway metabolic intermediate biosynthesis; chorismate biosynthesis; chorismate from D-erythrose 4-phosphate and phosphoenolpyruvate: step 6/7. Its function is as follows. Catalyzes the transfer of the enolpyruvyl moiety of phosphoenolpyruvate (PEP) to the 5-hydroxyl of shikimate-3-phosphate (S3P) to produce enolpyruvyl shikimate-3-phosphate and inorganic phosphate. The sequence is that of 3-phosphoshikimate 1-carboxyvinyltransferase from Brucella canis (strain ATCC 23365 / NCTC 10854 / RM-666).